A 72-amino-acid chain; its full sequence is Translation initiation factor IF-1 (72 aa).

The S1-like domain occupies 1 to 72 (MPKEEVLEFP…TKGRITYRFK (72 aa)).

This sequence belongs to the IF-1 family. In terms of assembly, component of the 30S ribosomal translation pre-initiation complex which assembles on the 30S ribosome in the order IF-2 and IF-3, IF-1 and N-formylmethionyl-tRNA(fMet); mRNA recruitment can occur at any time during PIC assembly.

It localises to the cytoplasm. In terms of biological role, one of the essential components for the initiation of protein synthesis. Stabilizes the binding of IF-2 and IF-3 on the 30S subunit to which N-formylmethionyl-tRNA(fMet) subsequently binds. Helps modulate mRNA selection, yielding the 30S pre-initiation complex (PIC). Upon addition of the 50S ribosomal subunit IF-1, IF-2 and IF-3 are released leaving the mature 70S translation initiation complex. The sequence is that of Translation initiation factor IF-1 from Rhizobium etli (strain ATCC 51251 / DSM 11541 / JCM 21823 / NBRC 15573 / CFN 42).